Reading from the N-terminus, the 200-residue chain is Imidazoleglycerol-phosphate dehydratase (200 aa).

It belongs to the imidazoleglycerol-phosphate dehydratase family.

The protein resides in the cytoplasm. The catalysed reaction is D-erythro-1-(imidazol-4-yl)glycerol 3-phosphate = 3-(imidazol-4-yl)-2-oxopropyl phosphate + H2O. Its pathway is amino-acid biosynthesis; L-histidine biosynthesis; L-histidine from 5-phospho-alpha-D-ribose 1-diphosphate: step 6/9. The sequence is that of Imidazoleglycerol-phosphate dehydratase from Renibacterium salmoninarum (strain ATCC 33209 / DSM 20767 / JCM 11484 / NBRC 15589 / NCIMB 2235).